The sequence spans 88 residues: Apolipoprotein C-I (88 aa).

The N-terminal stretch at 1-26 (MRLFIALPVLIVVVAMTLEGPAPAQA) is a signal peptide.

The protein belongs to the apolipoprotein C1 family. In terms of tissue distribution, adult and fetal liver.

It is found in the secreted. Its function is as follows. Inhibitor of lipoprotein binding to the low density lipoprotein (LDL) receptor, LDL receptor-related protein, and very low density lipoprotein (VLDL) receptor. Associates with high density lipoproteins (HDL) and the triacylglycerol-rich lipoproteins in the plasma and makes up about 10% of the protein of the VLDL and 2% of that of HDL. Appears to interfere directly with fatty acid uptake and is also the major plasma inhibitor of cholesteryl ester transfer protein (CETP). Modulates the interaction of APOE with beta-migrating VLDL and inhibits binding of beta-VLDL to the LDL receptor-related protein. Binds free fatty acids and reduces their intracellular esterification. The polypeptide is Apolipoprotein C-I (Apoc1) (Mus musculus (Mouse)).